Here is a 528-residue protein sequence, read N- to C-terminus: Bifunctional pantoate ligase/cytidylate kinase (528 aa).

The pantoate--beta-alanine ligase stretch occupies residues 1–293; sequence MRLFTTIAGL…IGSCRLIDNI (293 aa). 34 to 41 contributes to the ATP binding site; it reads MGALHKGH. The active-site Proton donor is His41. Gln65 contacts (R)-pantoate. Position 65 (Gln65) interacts with beta-alanine. 160-163 is a binding site for ATP; sequence GQKD. Position 166 (Gln166) interacts with (R)-pantoate. Residues Ile189 and 197 to 200 contribute to the ATP site; that span reads ISSR. The interval 294-528 is cytidylate kinase; sequence LLRNRKPIIA…YGKSSVNNII (235 aa).

This sequence in the N-terminal section; belongs to the pantothenate synthetase family. The protein in the C-terminal section; belongs to the cytidylate kinase family. Type 1 subfamily.

It is found in the cytoplasm. The catalysed reaction is (R)-pantoate + beta-alanine + ATP = (R)-pantothenate + AMP + diphosphate + H(+). It catalyses the reaction CMP + ATP = CDP + ADP. It carries out the reaction dCMP + ATP = dCDP + ADP. It participates in cofactor biosynthesis; (R)-pantothenate biosynthesis; (R)-pantothenate from (R)-pantoate and beta-alanine: step 1/1. Catalyzes the condensation of pantoate with beta-alanine in an ATP-dependent reaction via a pantoyl-adenylate intermediate. In terms of biological role, catalyzes the transfer of a phosphate group from ATP to either CMP or dCMP to form CDP or dCDP and ADP, respectively. This is Bifunctional pantoate ligase/cytidylate kinase from Trichodesmium erythraeum (strain IMS101).